The primary structure comprises 1137 residues: Morphogenesis-related protein MSB1 (1137 aa).

2 disordered regions span residues 1–59 (MNDM…NSMD) and 483–520 (QLKK…LSQT). Over residues 21-50 (SNSPKKAQKTNLSPNKNQNNEKNVPRSNGR) the composition is skewed to polar residues. Ser538 bears the Phosphoserine mark. Disordered regions lie at residues 577 to 620 (LNNL…EERV), 736 to 799 (STNT…SDSK), and 814 to 871 (AVSP…PQFS). The span at 593 to 608 (FEEKSKDAPIREEYHT) shows a compositional bias: basic and acidic residues. Residues 736–749 (STNTNDSCADSSKY) show a composition bias toward polar residues. Over residues 750 to 769 (TADRKLAEPRKISEESKVND) the composition is skewed to basic and acidic residues. Over residues 770–796 (DSSSYYSPNINNLPASRMPSQPTYSNS) the composition is skewed to polar residues. Phosphoserine occurs at positions 776 and 816.

Its function is as follows. May play a role in polarity establishment and bud formation. The MSB1 gene may be functionally redundant. In Saccharomyces cerevisiae (strain ATCC 204508 / S288c) (Baker's yeast), this protein is Morphogenesis-related protein MSB1 (MSB1).